Reading from the N-terminus, the 245-residue chain is Eukaryotic translation initiation factor 6 (245 aa).

Position 113 is a phosphotyrosine (Tyr113). A Phosphothreonine modification is found at Thr165. Ser166 carries the post-translational modification Phosphoserine. Phosphoserine; by CK1 is present on residues Ser174 and Ser175. Residue Ser235 is modified to Phosphoserine; by PKC. Ser239 and Ser243 each carry phosphoserine.

This sequence belongs to the eIF-6 family. Monomer. Associates with the 60S ribosomal subunit. Interacts with RACK1. Interacts with DICER1, AGO2, TARBP2, MOV10 and RPL7A; they form a large RNA-induced silencing complex (RISC). Post-translationally, phosphorylation at Ser-174 and Ser-175 by CSNK1D/CK1 promotes nuclear export. Ufmylated by UFL1.

Its subcellular location is the cytoplasm. The protein localises to the nucleus. It localises to the nucleolus. Functionally, binds to the 60S ribosomal subunit and prevents its association with the 40S ribosomal subunit to form the 80S initiation complex in the cytoplasm. Behaves as a stimulatory translation initiation factor downstream insulin/growth factors. Is also involved in ribosome biogenesis. Associates with pre-60S subunits in the nucleus and is involved in its nuclear export. Cytoplasmic release of TIF6 from 60S subunits and nuclear relocalization is promoted by a RACK1 (RACK1)-dependent protein kinase C activity. In tissues responsive to insulin, controls fatty acid synthesis and glycolysis by exerting translational control of adipogenic transcription factors such as CEBPB, CEBPD and ATF4 that have G/C rich or uORF in their 5'UTR. Required for ROS-dependent megakaryocyte maturation and platelets formation, controls the expression of mitochondrial respiratory chain genes involved in reactive oxygen species (ROS) synthesis. Involved in miRNA-mediated gene silencing by the RNA-induced silencing complex (RISC). Required for both miRNA-mediated translational repression and miRNA-mediated cleavage of complementary mRNAs by RISC. Modulates cell cycle progression and global translation of pre-B cells, its activation seems to be rate-limiting in tumorigenesis and tumor growth. In Rattus norvegicus (Rat), this protein is Eukaryotic translation initiation factor 6 (Eif6).